The following is a 114-amino-acid chain: UPF0342 protein LSEI_1724 (114 aa).

This sequence belongs to the UPF0342 family.

This chain is UPF0342 protein LSEI_1724, found in Lacticaseibacillus paracasei (strain ATCC 334 / BCRC 17002 / CCUG 31169 / CIP 107868 / KCTC 3260 / NRRL B-441) (Lactobacillus paracasei).